The following is a 449-amino-acid chain: MYHLWIKCLAAWIFLKRFNGVHVMQAKAPMYPNEPFLVFWNAPTTQCRLRYKVDLDLNTFHIVTNANDSLSGSAVTIFYPTHLGFYPHIDGRGHFFNGIIPQNESLAKHLNKSKSDINRMIPLRTFHGLGVIDWENWRPQWDRNWGSKNVYRNRSIQFARDLHPELSEDEIKRLAKQEYEKAAKSFMRDTLLLAEEMRPYGYWGYYLYPDCQNYNYKTKPDQYTGECPDIEITRNNQLLWLWRDSTALFPNIYLETVLRSSDNALKFVHHRLKESMRIASMARKDYALPVFPYARPFYAYTFEPLTEEDLVNTVGETAAMGAAGIVFWGSMQYASTVDSCRKVKDYIDGPLGRYIVNVTTAAKICSHFLCKKHGRCVRKHSDSNAFLHLFPDSFRILVHGNATEKKVIVKGKLELENLIFLINNFMCQCYQGWKGLYCEKHSIKDIRKI.

An N-terminal signal peptide occupies residues 1–23 (MYHLWIKCLAAWIFLKRFNGVHV). Cystine bridges form between Cys-47/Cys-340 and Cys-211/Cys-227. 3 N-linked (GlcNAc...) asparagine glycosylation sites follow: Asn-67, Asn-103, and Asn-111. Glu-135 serves as the catalytic Proton donor. Asn-153 is a glycosylation site (N-linked (GlcNAc...) asparagine). Asn-357 is a glycosylation site (N-linked (GlcNAc...) asparagine). Disulfide bonds link Cys-365–Cys-376, Cys-370–Cys-427, and Cys-429–Cys-438. Asn-401 carries N-linked (GlcNAc...) asparagine glycosylation. One can recognise an EGF-like domain in the interval 427 to 438 (CQCYQGWKGLYC).

The protein belongs to the glycosyl hydrolase 56 family. As to quaternary structure, monomer. As to expression, expressed by the venom gland.

The protein resides in the secreted. It carries out the reaction Random hydrolysis of (1-&gt;4)-linkages between N-acetyl-beta-D-glucosamine and D-glucuronate residues in hyaluronate.. Functionally, snake venom endo-hyaluronidase that degrades hyaluronan to smaller oligosaccharide fragments. In venom, it is not toxic by itself, but increases the diffusion of other venom proteins by degrading the extracellular matrix. In addition, it displays antiedematogenic activity. This is Hyaluronidase from Crotalus adamanteus (Eastern diamondback rattlesnake).